Consider the following 657-residue polypeptide: MDHFFIKRKRNSEVKYTEACSSSSVESGIVNSDNIEKNTDSNLQTSTSFEPHFKKKKVSARRYNEDYLKYGFIKCEKPFENDRPQCVICNNILANESLKPSKLKRHLETQHAELIDKPLEYFQRKKKDIKLSTQFLSCSTAVSEKALLSSYLVAYRVAKEKIANTAAEKIILPACLDMVRTIFDDKSADKLKTIPNDNTVSLRICTIAEHLETMLITRLQSGIDFAIQLDESTDIGSCTTLLVYVRYAWQDDFLEDFLCFLNLTSHLSGLDIFTELERRIVGQYKLNWKNCKGITSDGTATMTGKHSRVIKKLLEVTNNGAVWNHCFIHREGLASREIPQNLMEVLKNAVKVVNFIKGSSLNSRLLETFCSEIGTNHTHLLYHTKIRWLSQGKILSRVYELRNEIHFFLIEKKSHLASIFEDDTWVTKLAYLTDIFSILNELSLKLQGKNSDVFQHVERIQGFRKTLLLWQVRLKSNRPSYYMFPRFLQHIEENIINENILKEIKLEILLHLTSLSQTFNHFFPEEKFETLRENSWVKDPFAFRHPESIIELNLVPEEENELLQLSSSYTLKNDYETLSLSAFWMKVKEDFPLLSRKSVLLLLPFTTTSLCELGFSILTQLKTKERNGLNCAAVMRVALSSCVPDWNELMNRQAHPS.

This sequence belongs to the FAM200 family.

The polypeptide is Protein FAM200B (Homo sapiens (Human)).